Reading from the N-terminus, the 603-residue chain is Thread biopolymer filament subunit gamma (603 aa).

The head stretch occupies residues 1–191 (MASHSSVSYR…ENETMEEELK (191 aa)). In terms of domain architecture, IF rod spans 158–476 (VKNILGTLNQ…KLLEGQELMV (319 aa)). The interval 193–227 (LTGGVPMSPDSTVNLENVETQVTEMLTEVSNLTLE) is coil 1A. The segment at 228 to 240 (RVRLEIDVDHLRA) is linker 1. Positions 241–341 (TADEIKSKYE…DALNVMREEY (101 aa)) are coil 1B. The tract at residues 342–362 (QQVVTKNVQEAETYCKMQIDQ) is linker 12. Residues 363–381 (IQGISTQTTEQISILDKEI) form a coil 2A region. Residues 382 to 389 (NTLEKELQ) are linker 2. The coil 2B stretch occupies residues 390–510 (PLNVEYQRLL…SSVGYGASST (121 aa)). Positions 511-603 (TLGAISGGYS…GHDSTIILQQ (93 aa)) are tail. Over residues 562–587 (SSSGGHSMYSSSSMKRSSSKSASASA) the composition is skewed to low complexity. Residues 562–603 (SSSGGHSMYSSSSMKRSSSKSASASAGGYGTSGHDSTIILQQ) form a disordered region.

The protein belongs to the intermediate filament family. As to quaternary structure, coiled-coil heterodimer of an alpha and a gamma subunit. Assemble into 10 nm filaments. Forms a massive, conical, intermediate filament biopolymer of approximately 60 cm.

Its subcellular location is the secreted. The protein resides in the extracellular space. Functionally, released extracellularly into seawater and provides physical and biological defense against invasive organism by modulation of the viscoelastic properties of mucus. This Eptatretus stoutii (Pacific hagfish) protein is Thread biopolymer filament subunit gamma.